A 550-amino-acid chain; its full sequence is Carboxypeptidase Y homolog A (550 aa).

A signal peptide spans 1–18; sequence MKSLVLGLLVGSAIASGP. The propeptide occupies 19 to 131; the sequence is LQHVLHAPPE…KLAQYDLRIR (113 aa). Cystine bridges form between C185–C424, C319–C333, C343–C366, C350–C359, and C388–C394. An N-linked (GlcNAc...) asparagine glycan is attached at N216. S272 is an active-site residue. D463 is a catalytic residue. Residues N493 and N514 are each glycosylated (N-linked (GlcNAc...) asparagine). H525 is a catalytic residue.

This sequence belongs to the peptidase S10 family.

The protein localises to the vacuole. It carries out the reaction Release of a C-terminal amino acid with broad specificity.. Its function is as follows. Vacuolar carboxypeptidase involved in degradation of small peptides. Digests preferentially peptides containing an aliphatic or hydrophobic residue in P1' position, as well as methionine, leucine or phenylalanine in P1 position of ester substrate. The polypeptide is Carboxypeptidase Y homolog A (CPYA) (Paracoccidioides lutzii (strain ATCC MYA-826 / Pb01) (Paracoccidioides brasiliensis)).